Reading from the N-terminus, the 610-residue chain is Elongation factor 4 (610 aa).

The tr-type G domain maps to 11-193 (EKIRNFSIIA…QIVEKVPAPT (183 aa)). GTP is bound by residues 23–28 (DHGKST) and 140–143 (NKID).

It belongs to the TRAFAC class translation factor GTPase superfamily. Classic translation factor GTPase family. LepA subfamily.

The protein localises to the cell membrane. The enzyme catalyses GTP + H2O = GDP + phosphate + H(+). In terms of biological role, required for accurate and efficient protein synthesis under certain stress conditions. May act as a fidelity factor of the translation reaction, by catalyzing a one-codon backward translocation of tRNAs on improperly translocated ribosomes. Back-translocation proceeds from a post-translocation (POST) complex to a pre-translocation (PRE) complex, thus giving elongation factor G a second chance to translocate the tRNAs correctly. Binds to ribosomes in a GTP-dependent manner. This chain is Elongation factor 4, found in Streptococcus pyogenes serotype M49 (strain NZ131).